The sequence spans 241 residues: Proteasome subunit alpha (241 aa).

Belongs to the peptidase T1A family. As to quaternary structure, the 20S proteasome core is composed of 14 alpha and 14 beta subunits that assemble into four stacked heptameric rings, resulting in a barrel-shaped structure. The two inner rings, each composed of seven catalytic beta subunits, are sandwiched by two outer rings, each composed of seven alpha subunits. The catalytic chamber with the active sites is on the inside of the barrel. Has a gated structure, the ends of the cylinder being occluded by the N-termini of the alpha-subunits. Is capped by the proteasome-associated ATPase, ARC.

Its subcellular location is the cytoplasm. The protein operates within protein degradation; proteasomal Pup-dependent pathway. The formation of the proteasomal ATPase ARC-20S proteasome complex, likely via the docking of the C-termini of ARC into the intersubunit pockets in the alpha-rings, may trigger opening of the gate for substrate entry. Interconversion between the open-gate and close-gate conformations leads to a dynamic regulation of the 20S proteasome proteolysis activity. Component of the proteasome core, a large protease complex with broad specificity involved in protein degradation. In Frankia alni (strain DSM 45986 / CECT 9034 / ACN14a), this protein is Proteasome subunit alpha.